We begin with the raw amino-acid sequence, 501 residues long: Ectoine/hydroxyectoine transporter (501 aa).

Helical transmembrane passes span proline 9–proline 29, isoleucine 45–leucine 65, phenylalanine 86–glycine 106, alanine 137–alanine 157, leucine 190–methionine 210, valine 220–isoleucine 240, leucine 258–leucine 278, tryptophan 311–alanine 331, valine 343–glycine 363, leucine 395–threonine 415, isoleucine 441–glutamate 461, and threonine 465–phenylalanine 485.

Belongs to the BCCT transporter (TC 2.A.15) family.

Its subcellular location is the cell inner membrane. Its function is as follows. Mediates the import of ectoine and hydroxyectoine, which function as osmotic and cold stress protectants. Also has minor uptake activities for the compatible solutes proline and glycine betaine. The sequence is that of Ectoine/hydroxyectoine transporter from Virgibacillus pantothenticus.